Reading from the N-terminus, the 342-residue chain is MSVFVSGANGFIAQHIVDLLLKEDYKVIGSARSQEKAENLTEAFGNNPKFSMEVVPDISKLDAFDHVFQKHGKDIKIVLHTASPFCFDITDSERDLLIPAVNGVKGILHSIKKYAADSVERVVLTSSYAAVFDMAKENDKSLTFNEESWNPATWESCQSDPVNAYCGSKKFAEKAAWEFLEENRDSVKFELTAVNPVYVFGPQMFDKDVKKHLNTSCELVNSLMHLSPEDKIPELFGGYIDVRDVAKAHLVAFQKRETIGQRLIVSEARFTMQDVLDILNEDFPVLKGNIPVGKPGSGATHNTLGATLDNKKSKKLLGFKFRNLKETIDDTASQILKFEGRI.

NADP(+) is bound by residues 7-12 (GANGFI), arginine 32, lysine 36, 57-58 (DI), tyrosine 165, lysine 169, valine 199, and serine 216. The active-site Proton donor is lysine 169. Phosphoserine is present on serine 333.

It belongs to the NAD(P)-dependent epimerase/dehydratase family. Dihydroflavonol-4-reductase subfamily. In terms of assembly, monomer. Post-translationally, the N-terminus is blocked.

It localises to the cytoplasm. The protein resides in the nucleus. It catalyses the reaction (S)-lactaldehyde + NADP(+) = methylglyoxal + NADPH + H(+). The catalysed reaction is 3-methylbutanol + NADP(+) = 3-methylbutanal + NADPH + H(+). It carries out the reaction 2,5-hexanedione + 2 NADPH + 2 H(+) = (2S,5S)-hexanediol + 2 NADP(+). The enzyme catalyses (S)-3-chloro-1-phenyl-1-propanol + NADP(+) = 3-chloro-1-phenyl-1-propanone + NADPH + H(+). Activated by glutathione. Functionally, catalyzes the irreversible reduction of the cytotoxic compound methylglyoxal (MG, 2-oxopropanal) to (S)-lactaldehyde as an alternative to detoxification of MG by glyoxalase I GLO1. MG is synthesized via a bypath of glycolysis from dihydroxyacetone phosphate and is believed to play a role in cell cycle regulation and stress adaptation. Also catalyzes the reduction of 3-methylbutanal to 3-methylbutanol. Acts as a suppressor of 3-methylbutanol-induced filamentation by modulating the levels of 3-methylbutanal, the signal to which cells respond by filamentation. Also involved in ergosterol metabolism. In Saccharomyces cerevisiae (strain ATCC 204508 / S288c) (Baker's yeast), this protein is NADPH-dependent methylglyoxal reductase GRE2 (GRE2).